Here is a 311-residue protein sequence, read N- to C-terminus: Mediator of RNA polymerase II transcription subunit 27 (311 aa).

Belongs to the Mediator complex subunit 27 family. Component of the Mediator complex.

It is found in the nucleus. Component of the Mediator complex, a coactivator involved in the regulated transcription of nearly all RNA polymerase II-dependent genes. Mediator functions as a bridge to convey information from gene-specific regulatory proteins to the basal RNA polymerase II transcription machinery. Mediator is recruited to promoters by direct interactions with regulatory proteins and serves as a scaffold for the assembly of a functional preinitiation complex with RNA polymerase II and the general transcription factors. In Xenopus tropicalis (Western clawed frog), this protein is Mediator of RNA polymerase II transcription subunit 27 (med27).